Consider the following 447-residue polypeptide: Protein disulfide-isomerase like 2-2 (447 aa).

The first 26 residues, 1–26, serve as a signal peptide directing secretion; sequence MERKMYKSTVFPICCLLFALFDRGNA. Thioredoxin domains follow at residues 27 to 139 and 161 to 275; these read LYGS…QIKA and KKKS…QLES. Residues cysteine 62 and cysteine 65 each act as nucleophile in the active site. Cysteine 62 and cysteine 65 are joined by a disulfide. The segment at 146–170 is disordered; sequence DGKTSGTKNGGGSSEKKKSEPSASV. The N-linked (GlcNAc...) asparagine glycan is linked to asparagine 173. Residues cysteine 197 and cysteine 200 each act as nucleophile in the active site. Cysteine 197 and cysteine 200 are joined by a disulfide. The Prevents secretion from ER motif lies at 444–447; the sequence is KDDL.

Belongs to the protein disulfide isomerase family. In terms of tissue distribution, widely expressed.

Its subcellular location is the endoplasmic reticulum lumen. It catalyses the reaction Catalyzes the rearrangement of -S-S- bonds in proteins.. Functionally, acts as a protein-folding catalyst that interacts with nascent polypeptides to catalyze the formation, isomerization, and reduction or oxidation of disulfide bonds. This chain is Protein disulfide-isomerase like 2-2 (PDIL2-2), found in Arabidopsis thaliana (Mouse-ear cress).